A 116-amino-acid chain; its full sequence is Large ribosomal subunit protein uL24c (116 aa).

It belongs to the universal ribosomal protein uL24 family. As to quaternary structure, part of the 50S ribosomal subunit.

The protein resides in the plastid. It localises to the chloroplast. Its function is as follows. One of two assembly initiator proteins, it binds directly to the 5'-end of the 23S rRNA, where it nucleates assembly of the 50S subunit. In Pyropia yezoensis (Susabi-nori), this protein is Large ribosomal subunit protein uL24c (rpl24).